The sequence spans 348 residues: Dihydroorotase (348 aa).

Positions 17 and 19 each coordinate Zn(2+). Residues histidine 19–arginine 21 and asparagine 45 contribute to the substrate site. 3 residues coordinate Zn(2+): lysine 103, histidine 140, and histidine 178. Lysine 103 carries the post-translational modification N6-carboxylysine. Histidine 140 serves as a coordination point for substrate. Leucine 223 contacts substrate. Residue aspartate 251 coordinates Zn(2+). Residue aspartate 251 is part of the active site. The substrate site is built by histidine 255 and alanine 267.

The protein belongs to the metallo-dependent hydrolases superfamily. DHOase family. Class II DHOase subfamily. Homodimer. Zn(2+) serves as cofactor.

The catalysed reaction is (S)-dihydroorotate + H2O = N-carbamoyl-L-aspartate + H(+). It participates in pyrimidine metabolism; UMP biosynthesis via de novo pathway; (S)-dihydroorotate from bicarbonate: step 3/3. Functionally, catalyzes the reversible cyclization of carbamoyl aspartate to dihydroorotate. The protein is Dihydroorotase of Escherichia coli O17:K52:H18 (strain UMN026 / ExPEC).